Reading from the N-terminus, the 426-residue chain is Divalent metal cation transporter MntH (426 aa).

A run of 10 helical transmembrane segments spans residues 31 to 51, 58 to 78, 134 to 156, 169 to 189, 208 to 228, 256 to 276, 298 to 318, 337 to 357, 363 to 383, and 402 to 422; these read WYLL…GNVA, AQFG…AGLV, ILFR…LLLM, VITG…FVAT, SVLL…VYLH, VILA…VAAI, LGAT…LASA, IPML…LALG, ALVL…LPLV, and TVLG…LIYL.

It belongs to the NRAMP family.

Its subcellular location is the cell membrane. Its function is as follows. H(+)-stimulated, divalent metal cation uptake system. The polypeptide is Divalent metal cation transporter MntH (Mycobacterium leprae (strain TN)).